Here is a 231-residue protein sequence, read N- to C-terminus: Lipoprotein-releasing system ATP-binding protein LolD (231 aa).

One can recognise an ABC transporter domain in the interval 6–231 (LQVQAVSKSY…YLQAVAEHAQ (226 aa)). 42-49 (GTSGSGKS) contacts ATP.

Belongs to the ABC transporter superfamily. Lipoprotein translocase (TC 3.A.1.125) family. As to quaternary structure, the complex is composed of two ATP-binding proteins (LolD) and two transmembrane proteins (LolC and LolE).

The protein resides in the cell inner membrane. In terms of biological role, part of the ABC transporter complex LolCDE involved in the translocation of mature outer membrane-directed lipoproteins, from the inner membrane to the periplasmic chaperone, LolA. Responsible for the formation of the LolA-lipoprotein complex in an ATP-dependent manner. This is Lipoprotein-releasing system ATP-binding protein LolD from Shewanella sp. (strain MR-4).